A 1054-amino-acid chain; its full sequence is Probable sucrose-phosphate synthase 1 (1054 aa).

Basic and acidic residues predominate over residues 104–115 (RLERERGRREAV). Disordered regions lie at residues 104–125 (RLER…LSEG), 674–693 (LRNE…SDSL), and 708–727 (DGDK…DDRA).

Belongs to the glycosyltransferase 1 family. Homodimer or homotetramer.

The enzyme catalyses beta-D-fructose 6-phosphate + UDP-alpha-D-glucose = sucrose 6(F)-phosphate + UDP + H(+). The protein operates within glycan biosynthesis; sucrose biosynthesis; sucrose from D-fructose 6-phosphate and UDP-alpha-D-glucose: step 1/2. Its activity is regulated as follows. Activity is regulated by phosphorylation and moderated by concentration of metabolites and light. Plays a role in photosynthetic sucrose synthesis by catalyzing the rate-limiting step of sucrose biosynthesis from UDP-glucose and fructose- 6-phosphate. Involved in the regulation of carbon partitioning in the leaves of plants. May regulate the synthesis of sucrose and therefore play a major role as a limiting factor in the export of photoassimilates out of the leaf. Plays a role for sucrose availability that is essential for plant growth and fiber elongation. The polypeptide is Probable sucrose-phosphate synthase 1 (SPS1) (Craterostigma plantagineum (Blue gem)).